A 119-amino-acid polypeptide reads, in one-letter code: Large ribosomal subunit protein uL18 (119 aa).

Belongs to the universal ribosomal protein uL18 family. Part of the 50S ribosomal subunit; part of the 5S rRNA/L5/L18/L25 subcomplex. Contacts the 5S and 23S rRNAs.

Functionally, this is one of the proteins that bind and probably mediate the attachment of the 5S RNA into the large ribosomal subunit, where it forms part of the central protuberance. This Xylella fastidiosa (strain M23) protein is Large ribosomal subunit protein uL18.